The following is a 393-amino-acid chain: Glutamyl-tRNA reductase (393 aa).

Substrate-binding positions include T47–R50, S98, E103–D105, and Q109. C48 (nucleophile) is an active-site residue. G177–G182 is a binding site for NADP(+).

The protein belongs to the glutamyl-tRNA reductase family. As to quaternary structure, homodimer.

The enzyme catalyses (S)-4-amino-5-oxopentanoate + tRNA(Glu) + NADP(+) = L-glutamyl-tRNA(Glu) + NADPH + H(+). Its pathway is porphyrin-containing compound metabolism; protoporphyrin-IX biosynthesis; 5-aminolevulinate from L-glutamyl-tRNA(Glu): step 1/2. Catalyzes the NADPH-dependent reduction of glutamyl-tRNA(Glu) to glutamate 1-semialdehyde (GSA). In Pyrobaculum islandicum (strain DSM 4184 / JCM 9189 / GEO3), this protein is Glutamyl-tRNA reductase.